The chain runs to 380 residues: Probable polyglutamine synthesis accessory protein MT0602 (380 aa).

It belongs to the CapA family.

Functionally, could be involved in the biosynthesis, transport or localization of poly-alpha-L-glutamine (PLG), a cell wall component. Contributes to stress tolerance and virulence. The sequence is that of Probable polyglutamine synthesis accessory protein MT0602 from Mycobacterium tuberculosis (strain CDC 1551 / Oshkosh).